The primary structure comprises 384 residues: N-acetyldiaminopimelate deacetylase (384 aa).

Residue aspartate 74 is part of the active site. Catalysis depends on glutamate 133, which acts as the Proton acceptor.

This sequence belongs to the peptidase M20A family. N-acetyldiaminopimelate deacetylase subfamily.

The enzyme catalyses N-acetyl-(2S,6S)-2,6-diaminopimelate + H2O = (2S,6S)-2,6-diaminopimelate + acetate. Its pathway is amino-acid biosynthesis; L-lysine biosynthesis via DAP pathway; LL-2,6-diaminopimelate from (S)-tetrahydrodipicolinate (acetylase route): step 3/3. Catalyzes the conversion of N-acetyl-diaminopimelate to diaminopimelate and acetate. In Pediococcus pentosaceus (strain ATCC 25745 / CCUG 21536 / LMG 10740 / 183-1w), this protein is N-acetyldiaminopimelate deacetylase.